A 258-amino-acid polypeptide reads, in one-letter code: Glucanase inhibitor protein 3 (258 aa).

An N-terminal signal peptide occupies residues 1-19; it reads MKIISAVAASSIALGAVSA. The Peptidase S1 domain maps to 29 to 256; that stretch reads VLGGAVVPSG…ALEWINSITK (228 aa). Residues Cys56 and Cys72 are joined by a disulfide bond. 3 N-linked (GlcNAc...) asparagine glycosylation sites follow: Asn90, Asn105, and Asn110. Intrachain disulfides connect Cys180-Cys192 and Cys202-Cys233.

Belongs to the peptidase S1 family. As to quaternary structure, forms an apoplastic complex with host endoglucanases in tomato leaves during P.infestans infection.

Its subcellular location is the secreted. In terms of biological role, secreted effector that suppresses host plant glucan elicitor-mediated defense responses. Targets host endoglucanases and inhibits the endoglucanase-mediated release of elicitor-active glucan oligosaccharides from P.infestans cell walls. In Phytophthora infestans (Potato late blight agent), this protein is Glucanase inhibitor protein 3.